A 336-amino-acid chain; its full sequence is Methionine import ATP-binding protein MetN (336 aa).

Residues isoleucine 2–glycine 254 form the ABC transporter domain. Glycine 34–serine 41 is an ATP binding site.

It belongs to the ABC transporter superfamily. Methionine importer (TC 3.A.1.24) family. As to quaternary structure, the complex is composed of two ATP-binding proteins (MetN), two transmembrane proteins (MetI) and a solute-binding protein (MetQ).

The protein resides in the cell inner membrane. It catalyses the reaction L-methionine(out) + ATP + H2O = L-methionine(in) + ADP + phosphate + H(+). It carries out the reaction D-methionine(out) + ATP + H2O = D-methionine(in) + ADP + phosphate + H(+). Part of the ABC transporter complex MetNIQ involved in methionine import. Responsible for energy coupling to the transport system. The protein is Methionine import ATP-binding protein MetN of Campylobacter jejuni subsp. jejuni serotype O:2 (strain ATCC 700819 / NCTC 11168).